The sequence spans 312 residues: DNA-directed RNA polymerase subunit alpha (312 aa).

The alpha N-terminal domain (alpha-NTD) stretch occupies residues 1 to 226 (MIEFEKPIIT…EHLNLFTDLT (226 aa)). An alpha C-terminal domain (alpha-CTD) region spans residues 242–312 (NDEKLLDRTI…DLGLGLKNDK (71 aa)).

The protein belongs to the RNA polymerase alpha chain family. As to quaternary structure, homodimer. The RNAP catalytic core consists of 2 alpha, 1 beta, 1 beta' and 1 omega subunit. When a sigma factor is associated with the core the holoenzyme is formed, which can initiate transcription.

It carries out the reaction RNA(n) + a ribonucleoside 5'-triphosphate = RNA(n+1) + diphosphate. In terms of biological role, DNA-dependent RNA polymerase catalyzes the transcription of DNA into RNA using the four ribonucleoside triphosphates as substrates. This is DNA-directed RNA polymerase subunit alpha from Streptococcus thermophilus (strain CNRZ 1066).